Reading from the N-terminus, the 75-residue chain is Large ribosomal subunit protein bL31 (75 aa).

It belongs to the bacterial ribosomal protein bL31 family. Type A subfamily. In terms of assembly, part of the 50S ribosomal subunit.

Functionally, binds the 23S rRNA. In Nitrobacter winogradskyi (strain ATCC 25391 / DSM 10237 / CIP 104748 / NCIMB 11846 / Nb-255), this protein is Large ribosomal subunit protein bL31.